We begin with the raw amino-acid sequence, 113 residues long: Pro-FMRFamide-related neuropeptide FF (113 aa).

The N-terminal stretch at 1–20 (MDSRQAAALLVLLLLIDGGC) is a signal peptide. The propeptide occupies 21–65 (AEGPGGQQEDQLSAEEDSEPLPPQDAQTSGSLLHYLLQAMERPGR). Residues 22–48 (EGPGGQQEDQLSAEEDSEPLPPQDAQT) are disordered. Phe76 carries the phenylalanine amide modification. The propeptide occupies 79–92 (NTQGSWRNEWLSPR). Phe110 is modified (phenylalanine amide).

This sequence belongs to the FARP (FMRFamide related peptide) family.

It is found in the secreted. Functionally, morphine modulating peptides. Have wide-ranging physiologic effects, including the modulation of morphine-induced analgesia, elevation of arterial blood pressure, and increased somatostatin secretion from the pancreas. Neuropeptide FF potentiates and sensitizes ASIC1 and ASIC3 channels. This is Pro-FMRFamide-related neuropeptide FF from Homo sapiens (Human).